Here is a 160-residue protein sequence, read N- to C-terminus: 2-C-methyl-D-erythritol 2,4-cyclodiphosphate synthase (160 aa).

A divalent metal cation-binding residues include D9 and H11. Residues 9–11 and 35–36 contribute to the 4-CDP-2-C-methyl-D-erythritol 2-phosphate site; these read DVH and HS. H43 lines the a divalent metal cation pocket. Residues 57–59, 62–66, 101–107, 133–136, F140, and R143 each bind 4-CDP-2-C-methyl-D-erythritol 2-phosphate; these read DIG, FPDTD, AEAPKMA, and TTSE.

The protein belongs to the IspF family. Homotrimer. A divalent metal cation serves as cofactor.

It carries out the reaction 4-CDP-2-C-methyl-D-erythritol 2-phosphate = 2-C-methyl-D-erythritol 2,4-cyclic diphosphate + CMP. The protein operates within isoprenoid biosynthesis; isopentenyl diphosphate biosynthesis via DXP pathway; isopentenyl diphosphate from 1-deoxy-D-xylulose 5-phosphate: step 4/6. In terms of biological role, involved in the biosynthesis of isopentenyl diphosphate (IPP) and dimethylallyl diphosphate (DMAPP), two major building blocks of isoprenoid compounds. Catalyzes the conversion of 4-diphosphocytidyl-2-C-methyl-D-erythritol 2-phosphate (CDP-ME2P) to 2-C-methyl-D-erythritol 2,4-cyclodiphosphate (ME-CPP) with a corresponding release of cytidine 5-monophosphate (CMP). In Methylobacillus flagellatus (strain ATCC 51484 / DSM 6875 / VKM B-1610 / KT), this protein is 2-C-methyl-D-erythritol 2,4-cyclodiphosphate synthase.